The primary structure comprises 859 residues: Photoactivated adenylate cyclase subunit beta (859 aa).

Residues 56 to 149 enclose the BLUF 1 domain; the sequence is LRRLMYLSKS…GRMYGDWHMK (94 aa). The Guanylate cyclase 1 domain occupies 205–333; it reads VVTFIYLVEF…DCINTTSRIA (129 aa). The disordered stretch occupies residues 420–443; that stretch reads RPPIFDDTPKGNPRPRTPGYGGRQ. The 93-residue stretch at 471 to 563 folds into the BLUF 2 domain; that stretch reads LTTLTYISQA…RVYPSEWTLT (93 aa). The Guanylate cyclase 2 domain maps to 619–748; sequence VMLATDICSF…AVSARVMEVE (130 aa). The tract at residues 813 to 859 is disordered; that stretch reads AARSGEKPLTEPEEAKPDFRVSPGRVRHGDSGRRSNSAQGKRSIQVR. The segment covering 815 to 831 has biased composition (basic and acidic residues); the sequence is RSGEKPLTEPEEAKPDF. Residues 846–859 are compositionally biased toward polar residues; sequence RSNSAQGKRSIQVR.

The protein belongs to the adenylyl cyclase class-4/guanylyl cyclase family. As to quaternary structure, heterotetramer of two alpha and two beta subunits. It depends on FAD as a cofactor.

The protein localises to the cell projection. The protein resides in the cilium. It localises to the flagellum. It carries out the reaction ATP = 3',5'-cyclic AMP + diphosphate. Its activity is regulated as follows. Activity increased by up to 80-fold under blue light. In terms of biological role, acts as a blue light photoreceptor for the step-up photophobic response. Mediates photoavoidance. This Euglena gracilis protein is Photoactivated adenylate cyclase subunit beta.